Reading from the N-terminus, the 458-residue chain is Tyrosine phenol-lyase (458 aa).

The residue at position 258 (K258) is an N6-(pyridoxal phosphate)lysine.

Belongs to the beta-eliminating lyase family. In terms of assembly, homotetramer. Pyridoxal 5'-phosphate is required as a cofactor.

It catalyses the reaction L-tyrosine + H2O = phenol + pyruvate + NH4(+). In Pasteurella multocida (strain Pm70), this protein is Tyrosine phenol-lyase (tpl).